Consider the following 100-residue polypeptide: Class II hydrophobin 4 (100 aa).

A signal peptide spans 1–17 (MQFYAIASLFLAGTAFA). Disulfide bonds link cysteine 29–cysteine 79, cysteine 40–cysteine 70, cysteine 41–cysteine 53, and cysteine 80–cysteine 92.

Belongs to the cerato-ulmin hydrophobin family.

It localises to the secreted. Its subcellular location is the cell wall. In terms of biological role, aerial growth, conidiation, and dispersal of filamentous fungi in the environment rely upon a capability of their secreting small amphipathic proteins called hydrophobins (HPBs) with low sequence identity. Class I can self-assemble into an outermost layer of rodlet bundles on aerial cell surfaces, conferring cellular hydrophobicity that supports fungal growth, development and dispersal; whereas Class II form highly ordered films at water-air interfaces through intermolecular interactions but contribute nothing to the rodlet structure. Does not seem to be important for the ability to cause seedling disease. The sequence is that of Class II hydrophobin 4 from Gibberella moniliformis (Maize ear and stalk rot fungus).